A 132-amino-acid polypeptide reads, in one-letter code: Replication enhancer protein (132 aa).

This sequence belongs to the geminiviridae replication enhancer protein family. As to quaternary structure, homooligomer. Interacts with the replication-associated protein (REP). Interacts with host proliferating cell nuclear antigen (PCNA). Interacts with host retinoblastoma-related protein 1 (RBR1), and may thereby deregulate the host cell cycle. Oligomerization and interaction with PCNA are necessary for optimal replication enhancement.

In terms of biological role, increases viral DNA accumulation. Enhances infectivity and symptom expression. The protein is Replication enhancer protein of Solanum lycopersicum (Tomato).